We begin with the raw amino-acid sequence, 275 residues long: NH(3)-dependent NAD(+) synthetase (275 aa).

39 to 46 lines the ATP pocket; the sequence is GLSGGVDS. D45 contacts Mg(2+). Deamido-NAD(+) is bound at residue R124. T144 contacts ATP. E149 contacts Mg(2+). Residues K157 and D164 each contribute to the deamido-NAD(+) site. The ATP site is built by K173 and S195. 255 to 256 serves as a coordination point for deamido-NAD(+); sequence HK.

It belongs to the NAD synthetase family. In terms of assembly, homodimer.

The enzyme catalyses deamido-NAD(+) + NH4(+) + ATP = AMP + diphosphate + NAD(+) + H(+). Its pathway is cofactor biosynthesis; NAD(+) biosynthesis; NAD(+) from deamido-NAD(+) (ammonia route): step 1/1. In terms of biological role, catalyzes the ATP-dependent amidation of deamido-NAD to form NAD. Uses ammonia as a nitrogen source. The sequence is that of NH(3)-dependent NAD(+) synthetase from Staphylothermus marinus (strain ATCC 43588 / DSM 3639 / JCM 9404 / F1).